A 970-amino-acid chain; its full sequence is m7GpppN-mRNA hydrolase (970 aa).

The region spanning 101–228 (KSIPVRGAAI…IKYYLINSMM (128 aa)) is the Nudix hydrolase domain. At S116 the chain carries Phosphoserine. The Nudix box motif lies at 134–155 (GKISKDENDIDCCIREVKEEIG). Residues E149 and E153 each coordinate Mn(2+). Positions 302-314 (QHLKEQSGEHNQQ) are enriched in basic and acidic residues. Disordered regions lie at residues 302–341 (QHLK…ANNK), 417–465 (AVSQ…PKLK), 501–520 (SSQK…NDSV), and 528–692 (YEDF…LSST). The span at 315–334 (KDQQSSFSSQQQPSIFPSLS) shows a compositional bias: low complexity. Residue S439 is modified to Phosphoserine. The span at 528-539 (YEDFESSSDEEV) shows a compositional bias: acidic residues. A compositionally biased stretch (basic and acidic residues) spans 560–576 (SEKDSRRSQKEKPRNDA). A compositionally biased stretch (polar residues) spans 577–590 (SKTNLNASAESNSV). Residues 596-608 (KSSPSTQSKQNSS) are compositionally biased toward low complexity. Positions 625-637 (DAYEVFESSSDEE) are enriched in acidic residues. Phosphothreonine is present on T677. Polar residues predominate over residues 677 to 691 (TESNKSINETVGLSS). 6 positions are modified to phosphoserine: S679, S682, S751, S771, S773, and S778. A disordered region spans residues 831 to 867 (LKKNDSTGYPRTEGGPSSEMSTSMKRNDATNNQELDK). The segment covering 848 to 863 (SEMSTSMKRNDATNNQ) has biased composition (polar residues).

This sequence belongs to the Nudix hydrolase family. DCP2 subfamily. As to quaternary structure, component of the decapping complex composed of DCP1 and DCP2. Interacts with mRNA, LSM2, LSM4 and LSM8. Interacts with EDC3. Mn(2+) serves as cofactor.

The protein localises to the cytoplasm. It is found in the P-body. The enzyme catalyses a 5'-end (N(7)-methyl 5'-triphosphoguanosine)-ribonucleoside in mRNA + H2O = N(7)-methyl-GDP + a 5'-end phospho-ribonucleoside in mRNA + 2 H(+). Its function is as follows. Catalytic component of the decapping complex necessary for the degradation of mRNAs, both in normal mRNA turnover and in nonsense-mediated mRNA decay. Removes the 7-methyl guanine cap structure from mRNA molecules, yielding a 5'-phosphorylated mRNA fragment and 7m-GDP. Decapping is the major pathway of mRNA degradation in yeast and occurs through deadenylation, decapping and subsequent 5' to 3' exonucleolytic decay of the transcript body. Blocks autophagy in nutrient-rich conditions by repressing the expression of ATG-related genes through degradation of their transcripts. This is m7GpppN-mRNA hydrolase from Saccharomyces cerevisiae (strain ATCC 204508 / S288c) (Baker's yeast).